The primary structure comprises 484 residues: Protein nucleotidyltransferase YdiU (484 aa).

ATP-binding residues include glycine 81, glycine 83, arginine 84, lysine 103, aspartate 115, glycine 116, arginine 166, and arginine 173. The active-site Proton acceptor is aspartate 244. Residues asparagine 245 and aspartate 254 each contribute to the Mg(2+) site. Aspartate 254 is a binding site for ATP.

Belongs to the SELO family. Requires Mg(2+) as cofactor. The cofactor is Mn(2+).

The catalysed reaction is L-seryl-[protein] + ATP = 3-O-(5'-adenylyl)-L-seryl-[protein] + diphosphate. It catalyses the reaction L-threonyl-[protein] + ATP = 3-O-(5'-adenylyl)-L-threonyl-[protein] + diphosphate. It carries out the reaction L-tyrosyl-[protein] + ATP = O-(5'-adenylyl)-L-tyrosyl-[protein] + diphosphate. The enzyme catalyses L-histidyl-[protein] + UTP = N(tele)-(5'-uridylyl)-L-histidyl-[protein] + diphosphate. The catalysed reaction is L-seryl-[protein] + UTP = O-(5'-uridylyl)-L-seryl-[protein] + diphosphate. It catalyses the reaction L-tyrosyl-[protein] + UTP = O-(5'-uridylyl)-L-tyrosyl-[protein] + diphosphate. Functionally, nucleotidyltransferase involved in the post-translational modification of proteins. It can catalyze the addition of adenosine monophosphate (AMP) or uridine monophosphate (UMP) to a protein, resulting in modifications known as AMPylation and UMPylation. This is Protein nucleotidyltransferase YdiU from Shewanella putrefaciens (strain CN-32 / ATCC BAA-453).